A 361-amino-acid chain; its full sequence is Adenosine kinase (361 aa).

The Nuclear localization signal signature appears at 7 to 15 (PKPKKLKVE). Residue aspartate 34 coordinates adenosine. Serine 48 serves as a coordination point for Mg(2+). Phosphotyrosine is present on tyrosine 76. Position 147 (asparagine 147) interacts with Mg(2+). Glutamine 305 provides a ligand contact to adenosine. The active site involves aspartate 316. The active-site Proton acceptor is aspartate 316.

The protein belongs to the carbohydrate kinase PfkB family. Monomer. It depends on Mg(2+) as a cofactor.

The protein resides in the nucleus. It catalyses the reaction adenosine + ATP = AMP + ADP + H(+). It participates in purine metabolism; AMP biosynthesis via salvage pathway; AMP from adenosine: step 1/1. Catalyzes the phosphorylation of the purine nucleoside adenosine at the 5' position in an ATP-dependent manner. Serves as a potential regulator of concentrations of extracellular adenosine and intracellular adenine nucleotides. This chain is Adenosine kinase (Adk), found in Rattus norvegicus (Rat).